A 517-amino-acid polypeptide reads, in one-letter code: Bifunctional purine biosynthesis protein PurH (517 aa).

The 145-residue stretch at 1–145 folds into the MGS-like domain; that stretch reads MSPLALVSVS…KNHKDVSVLV (145 aa).

It belongs to the PurH family.

It carries out the reaction (6R)-10-formyltetrahydrofolate + 5-amino-1-(5-phospho-beta-D-ribosyl)imidazole-4-carboxamide = 5-formamido-1-(5-phospho-D-ribosyl)imidazole-4-carboxamide + (6S)-5,6,7,8-tetrahydrofolate. The catalysed reaction is IMP + H2O = 5-formamido-1-(5-phospho-D-ribosyl)imidazole-4-carboxamide. It functions in the pathway purine metabolism; IMP biosynthesis via de novo pathway; 5-formamido-1-(5-phospho-D-ribosyl)imidazole-4-carboxamide from 5-amino-1-(5-phospho-D-ribosyl)imidazole-4-carboxamide (10-formyl THF route): step 1/1. Its pathway is purine metabolism; IMP biosynthesis via de novo pathway; IMP from 5-formamido-1-(5-phospho-D-ribosyl)imidazole-4-carboxamide: step 1/1. This chain is Bifunctional purine biosynthesis protein PurH, found in Prochlorococcus marinus (strain MIT 9301).